A 158-amino-acid chain; its full sequence is Transcription antitermination protein NusB (158 aa).

The protein belongs to the NusB family.

Its function is as follows. Involved in transcription antitermination. Required for transcription of ribosomal RNA (rRNA) genes. Binds specifically to the boxA antiterminator sequence of the ribosomal RNA (rrn) operons. In Bartonella henselae (strain ATCC 49882 / DSM 28221 / CCUG 30454 / Houston 1) (Rochalimaea henselae), this protein is Transcription antitermination protein NusB.